The following is a 441-amino-acid chain: Proline--tRNA ligase (441 aa).

Belongs to the class-II aminoacyl-tRNA synthetase family. ProS type 2 subfamily. As to quaternary structure, homodimer.

It is found in the cytoplasm. The enzyme catalyses tRNA(Pro) + L-proline + ATP = L-prolyl-tRNA(Pro) + AMP + diphosphate. Its function is as follows. Catalyzes the attachment of proline to tRNA(Pro) in a two-step reaction: proline is first activated by ATP to form Pro-AMP and then transferred to the acceptor end of tRNA(Pro). In Afipia carboxidovorans (strain ATCC 49405 / DSM 1227 / KCTC 32145 / OM5) (Oligotropha carboxidovorans), this protein is Proline--tRNA ligase.